Here is a 358-residue protein sequence, read N- to C-terminus: GDSL esterase/lipase EXL5 (358 aa).

Residues Met1–Ala21 form the signal peptide. N-linked (GlcNAc...) asparagine glycosylation is present at Asn24. Catalysis depends on Ser36, which acts as the Nucleophile. Residues Asp333 and His336 contribute to the active site.

The protein belongs to the 'GDSL' lipolytic enzyme family. As to expression, flower buds.

The protein resides in the secreted. The protein is GDSL esterase/lipase EXL5 (EXL5) of Arabidopsis thaliana (Mouse-ear cress).